Here is a 76-residue protein sequence, read N- to C-terminus: Small ribosomal subunit protein bS18 (76 aa).

Belongs to the bacterial ribosomal protein bS18 family. As to quaternary structure, part of the 30S ribosomal subunit. Forms a tight heterodimer with protein bS6.

In terms of biological role, binds as a heterodimer with protein bS6 to the central domain of the 16S rRNA, where it helps stabilize the platform of the 30S subunit. This Tolumonas auensis (strain DSM 9187 / NBRC 110442 / TA 4) protein is Small ribosomal subunit protein bS18.